Consider the following 138-residue polypeptide: ATP synthase epsilon chain (138 aa).

The protein belongs to the ATPase epsilon chain family. As to quaternary structure, F-type ATPases have 2 components, CF(1) - the catalytic core - and CF(0) - the membrane proton channel. CF(1) has five subunits: alpha(3), beta(3), gamma(1), delta(1), epsilon(1). CF(0) has three main subunits: a, b and c.

The protein resides in the cell inner membrane. In terms of biological role, produces ATP from ADP in the presence of a proton gradient across the membrane. This Geobacter metallireducens (strain ATCC 53774 / DSM 7210 / GS-15) protein is ATP synthase epsilon chain.